The sequence spans 2326 residues: Telomere-associated protein RIF1 (2326 aa).

Disordered regions lie at residues 381-410, 1105-1965, and 1993-2050; these read QGTPSRVPSNPNSANPPQKPGPYPFASPAT, YTQS…CITP, and VENK…DDSL. Residues 382–396 show a composition bias toward polar residues; the sequence is GTPSRVPSNPNSANP. 2 stretches are compositionally biased toward basic and acidic residues: residues 1112-1126 and 1150-1182; these read SLEKSPLENAKEDFK and CKVDNPLEDVKEKSAYHIEKNSNSEEESSRGDR. A compositionally biased stretch (low complexity) spans 1216 to 1225; it reads SAISCSSTSS. Composition is skewed to polar residues over residues 1233–1242 and 1252–1270; these read QPASRRQSFI and SRPFSPSALNSVSEVSQSA. Basic and acidic residues predominate over residues 1290-1299; sequence KSGEESRKSS. Polar residues-rich tracts occupy residues 1318–1332 and 1341–1353; these read MEQQGNQQAKLVTNS and SFVSNSVENSPES. A compositionally biased stretch (basic and acidic residues) spans 1376-1402; that stretch reads PDIKKAEAVMAEIEKVRAFEMDSKENT. The span at 1403 to 1412 shows a compositional bias: polar residues; that stretch reads PPKTAVSSEQ. Composition is skewed to basic and acidic residues over residues 1448 to 1480, 1489 to 1511, and 1519 to 1539; these read QDKEDGYQKKDKRKEDEKALQKKVPQTKEDASQ, ASEHAIKKESSLPERSAAEDLGS, and GADEEANRSAGKPEDTLKSDS. Residues 1564–1573 are compositionally biased toward polar residues; the sequence is SSQGLLSSIE. A compositionally biased stretch (basic residues) spans 1586 to 1595; that stretch reads SLKKKSGKTK. Residues 1596 to 1609 show a composition bias toward basic and acidic residues; sequence NKSDSLEGKRKDVQ. Polar residues-rich tracts occupy residues 1610–1640 and 1671–1683; these read PESQSHGVSSQVDESKNLSGMNESELSSEVS and RTSPSTQNVSVEQ. Basic and acidic residues predominate over residues 1697–1712; that stretch reads RVSDEVLKGDENKCIE. The segment covering 1713–1745 has biased composition (polar residues); it reads KQSSVEQHSSVQPENVQGANTSGSDLSSLQMQD. The segment covering 1776–1785 has biased composition (basic and acidic residues); the sequence is SKSEDPRELI. The segment covering 1795–1813 has biased composition (polar residues); that stretch reads AVSTAEVSGSSNLEESLSI. Composition is skewed to basic and acidic residues over residues 1869-1884, 1908-1925, and 1932-1954; these read VEIKVKEEVDGNDRAE, SEEKAAVEKEEESQHGEM, and DGSKPETKQMDELEGNRDGKEEA. Positions 2009–2036 are enriched in polar residues; that stretch reads SFTSVNGSPSGVQARCTWSPSASPSTSI.

The protein belongs to the RIF1 family. Interacts with TP53BP1 (when phosphorylated by ATM).

It localises to the nucleus. The protein localises to the chromosome. The protein resides in the telomere. It is found in the cytoplasm. Its subcellular location is the cytoskeleton. It localises to the spindle. In terms of biological role, key regulator of TP53BP1 that plays a key role in the repair of double-strand DNA breaks (DSBs) in response to DNA damage: acts by promoting non-homologous end joining (NHEJ)-mediated repair of DSBs. In response to DNA damage, interacts with ATM-phosphorylated TP53BP1, allowing recruitment to DNA DSBs. Once recruited to DSBs, RIF1 and TP53BP1 act by promoting NHEJ-mediated repair of DSBs. In the same time, RIF1 and TP53BP1 specifically counteract DSBs resection via homologous recombination (HR) during G1 phase. This chain is Telomere-associated protein RIF1, found in Gallus gallus (Chicken).